We begin with the raw amino-acid sequence, 199 residues long: FMN-dependent NADH:quinone oxidoreductase 1 (199 aa).

FMN-binding positions include S10, 17–19, and 87–90; these read SNS and MYNF.

This sequence belongs to the azoreductase type 1 family. In terms of assembly, homodimer. It depends on FMN as a cofactor.

The catalysed reaction is 2 a quinone + NADH + H(+) = 2 a 1,4-benzosemiquinone + NAD(+). It carries out the reaction N,N-dimethyl-1,4-phenylenediamine + anthranilate + 2 NAD(+) = 2-(4-dimethylaminophenyl)diazenylbenzoate + 2 NADH + 2 H(+). Quinone reductase that provides resistance to thiol-specific stress caused by electrophilic quinones. Functionally, also exhibits azoreductase activity. Catalyzes the reductive cleavage of the azo bond in aromatic azo compounds to the corresponding amines. The chain is FMN-dependent NADH:quinone oxidoreductase 1 from Mesoplasma florum (strain ATCC 33453 / NBRC 100688 / NCTC 11704 / L1) (Acholeplasma florum).